We begin with the raw amino-acid sequence, 295 residues long: Urease accessory protein UreD (295 aa).

Belongs to the UreD family. As to quaternary structure, ureD, UreF and UreG form a complex that acts as a GTP-hydrolysis-dependent molecular chaperone, activating the urease apoprotein by helping to assemble the nickel containing metallocenter of UreC. The UreE protein probably delivers the nickel.

The protein resides in the cytoplasm. In terms of biological role, required for maturation of urease via the functional incorporation of the urease nickel metallocenter. The polypeptide is Urease accessory protein UreD (Ralstonia nicotianae (strain ATCC BAA-1114 / GMI1000) (Ralstonia solanacearum)).